Here is a 52-residue protein sequence, read N- to C-terminus: Repressor-like protein SSo7c3 (52 aa).

The 48-residue stretch at 4-51 folds into the SpoVT-AbrB domain; the sequence is EEVVKVSRNYQVTIPAKVRQKFPVKEGDLVKVIYDENGGVVKIQILDS.

This is Repressor-like protein SSo7c3 from Saccharolobus solfataricus (strain ATCC 35092 / DSM 1617 / JCM 11322 / P2) (Sulfolobus solfataricus).